A 395-amino-acid chain; its full sequence is Tyrosine--tRNA ligase 2 (395 aa).

Residues 42-51 carry the 'HIGH' region motif; that stretch reads PTAPDIHLGH. The 'KMSKS' region signature appears at 226–230; the sequence is KMSKS. An ATP-binding site is contributed by Lys229. Positions 334-394 constitute an S4 RNA-binding domain; that stretch reads IAISNLLKEA…GKRKFARVTI (61 aa).

This sequence belongs to the class-I aminoacyl-tRNA synthetase family. TyrS type 2 subfamily. As to quaternary structure, homodimer.

Its subcellular location is the cytoplasm. It carries out the reaction tRNA(Tyr) + L-tyrosine + ATP = L-tyrosyl-tRNA(Tyr) + AMP + diphosphate + H(+). Functionally, catalyzes the attachment of tyrosine to tRNA(Tyr) in a two-step reaction: tyrosine is first activated by ATP to form Tyr-AMP and then transferred to the acceptor end of tRNA(Tyr). This Vibrio cholerae serotype O1 (strain ATCC 39315 / El Tor Inaba N16961) protein is Tyrosine--tRNA ligase 2.